A 306-amino-acid chain; its full sequence is D-glucosamine-6-phosphate 4-epimerase (306 aa).

The SIS domain maps to 19–153 (DIPGVKTAEK…TGSNYRVQDL (135 aa)). Glu200 serves as the catalytic Proton acceptor. Residue His216 is the Proton donor of the active site. Arg296 (proton acceptor) is an active-site residue.

Belongs to the PGI/PMI family.

It carries out the reaction D-glucosamine 6-phosphate = D-galactosamine 6-phosphate. In terms of biological role, involved in the synthesis of UDP-N-acetylgalactosamine (UDP-GalNAc). Catalyzes the conversion of glucosamine-6-phosphate (GlcN-6-P) to galactosamine-6-phosphate (GalN-6-P). This Sulfolobus acidocaldarius (strain ATCC 33909 / DSM 639 / JCM 8929 / NBRC 15157 / NCIMB 11770) protein is D-glucosamine-6-phosphate 4-epimerase.